We begin with the raw amino-acid sequence, 396 residues long: B2 bradykinin receptor (396 aa).

At 1 to 65 the chain is on the extracellular side; it reads MDTRSSLCPK…EWWSWLNAIQ (65 aa). Asn-33 and Asn-44 each carry an N-linked (GlcNAc...) asparagine glycan. Residues 66–89 form a helical membrane-spanning segment; sequence APFLWVLFLLAALENIFVLSVFCL. The Cytoplasmic portion of the chain corresponds to 90–98; it reads HKTNCTVAE. Residues 99-123 form a helical membrane-spanning segment; that stretch reads IYLGNLAAADLILACGLPFWAITIA. The Extracellular portion of the chain corresponds to 124–136; sequence NNFDWLFGEVLCR. A disulfide bond links Cys-135 and Cys-216. Residues 137-158 traverse the membrane as a helical segment; that stretch reads VVNTMIYMNLYSSICFLMLVSI. Topologically, residues 159-180 are cytoplasmic; the sequence is DRYLALVKTMSMGRMRGVRWAK. Position 161 is a phosphotyrosine (Tyr-161). Residues 181–203 form a helical membrane-spanning segment; sequence LYSLVIWSCTLLLSSPMLVFRTM. Residues 204 to 226 lie on the Extracellular side of the membrane; sequence KDYREEGHNVTACVIVYPSRSWE. Residue Asn-212 is glycosylated (N-linked (GlcNAc...) asparagine). The helical transmembrane segment at 227 to 253 threads the bilayer; that stretch reads VFTNMLLNLVGFLLPLSIITFCTVRIM. The Cytoplasmic portion of the chain corresponds to 254–272; that stretch reads QVLRNNEMKKFKEVQTEKK. A helical membrane pass occupies residues 273-297; that stretch reads ATVLVLAVLGLFVLCWFPFQISTFL. Residues 298 to 316 lie on the Extracellular side of the membrane; the sequence is DTLLRLGVLSGCWNERAVD. A helical membrane pass occupies residues 317-340; sequence IVTQISSYVAYSNSCLNPLVYVIV. The Cytoplasmic segment spans residues 341-396; that stretch reads GKRFRKKSREVYQAICRKGGCMGESVQMENSMGTLRTSISVDRQIHKLQDWAGNKQ. The residue at position 352 (Tyr-352) is a Phosphotyrosine. The S-palmitoyl cysteine moiety is linked to residue Cys-356. 2 positions are modified to phosphoserine: Ser-365 and Ser-371. Thr-374 carries the post-translational modification Phosphothreonine. A phosphoserine; by GRK6 mark is found at Ser-378 and Ser-380.

The protein belongs to the G-protein coupled receptor 1 family. Bradykinin receptor subfamily. BDKRB2 sub-subfamily. Forms a complex with PECAM1 and GNAQ. Interacts with PECAM1. Post-translationally, diphosphorylation at Ser-365 and Ser-371, at Ser-378 and Ser-380, and at Thr-374 and Ser-380 seem to be correlated pairwise. Palmitoylation at Cys-356 and phosphorylation at Tyr-352 seem to be mutually exclusive. In terms of tissue distribution, uterus, vas deferens, kidney, ileum, heart, testis, lung and brain.

The protein localises to the cell membrane. Receptor for bradykinin. It is associated with G proteins that activate a phosphatidylinositol-calcium second messenger system. This is B2 bradykinin receptor (Bdkrb2) from Rattus norvegicus (Rat).